We begin with the raw amino-acid sequence, 315 residues long: Ribose-phosphate pyrophosphokinase (315 aa).

ATP-binding positions include 37–39 (DGE) and 96–97 (RQ). 2 residues coordinate Mg(2+): His-131 and Asp-170. Residue Lys-194 is part of the active site. D-ribose 5-phosphate is bound by residues Arg-196, Asp-220, and 224 to 228 (DTGGT).

It belongs to the ribose-phosphate pyrophosphokinase family. Class I subfamily. Homohexamer. The cofactor is Mg(2+).

The protein localises to the cytoplasm. It carries out the reaction D-ribose 5-phosphate + ATP = 5-phospho-alpha-D-ribose 1-diphosphate + AMP + H(+). Its pathway is metabolic intermediate biosynthesis; 5-phospho-alpha-D-ribose 1-diphosphate biosynthesis; 5-phospho-alpha-D-ribose 1-diphosphate from D-ribose 5-phosphate (route I): step 1/1. Involved in the biosynthesis of the central metabolite phospho-alpha-D-ribosyl-1-pyrophosphate (PRPP) via the transfer of pyrophosphoryl group from ATP to 1-hydroxyl of ribose-5-phosphate (Rib-5-P). The chain is Ribose-phosphate pyrophosphokinase from Buchnera aphidicola subsp. Schizaphis graminum (strain Sg).